The sequence spans 126 residues: Ribosome-binding factor A (126 aa).

It belongs to the RbfA family. Monomer. Binds 30S ribosomal subunits, but not 50S ribosomal subunits or 70S ribosomes.

Its subcellular location is the cytoplasm. One of several proteins that assist in the late maturation steps of the functional core of the 30S ribosomal subunit. Associates with free 30S ribosomal subunits (but not with 30S subunits that are part of 70S ribosomes or polysomes). Required for efficient processing of 16S rRNA. May interact with the 5'-terminal helix region of 16S rRNA. In Geobacillus sp. (strain WCH70), this protein is Ribosome-binding factor A.